Here is a 95-residue protein sequence, read N- to C-terminus: Integration host factor subunit beta (95 aa).

The segment at 57 to 76 (APRTGRNPKTGDKVDLEGKY) is disordered. Positions 65-76 (KTGDKVDLEGKY) are enriched in basic and acidic residues.

It belongs to the bacterial histone-like protein family. Heterodimer of an alpha and a beta chain.

In terms of biological role, this protein is one of the two subunits of integration host factor, a specific DNA-binding protein that functions in genetic recombination as well as in transcriptional and translational control. The protein is Integration host factor subunit beta of Enterobacter sp. (strain 638).